A 611-amino-acid polypeptide reads, in one-letter code: Chaperone protein DnaK (611 aa).

At T173 the chain carries Phosphothreonine; by autocatalysis. Residues 579–592 show a composition bias toward low complexity; the sequence is AAGQAEGAQGAQDA. The segment at 579–611 is disordered; that stretch reads AAGQAEGAQGAQDAGAKKDNVVDAEFEEVKEDK. Positions 600–611 are enriched in acidic residues; it reads VDAEFEEVKEDK.

Belongs to the heat shock protein 70 family.

Its function is as follows. Acts as a chaperone. In Bacillus mycoides (strain KBAB4) (Bacillus weihenstephanensis), this protein is Chaperone protein DnaK.